Reading from the N-terminus, the 559-residue chain is Proton-coupled zinc antiporter SLC30A9, mitochondrial (559 aa).

A disordered region spans residues 58-96 (SSDQKEDGGSKGTSAASSPEKSMAGLDPSKPEQKSTFPP). 5 helical membrane-spanning segments follow: residues 230–250 (VVIV…LAWV), 305–325 (GVGI…IGLL), 333–353 (LLWA…TLLV), 389–409 (AAAV…SLTG), and 415–435 (SLGS…LIYT). Positions 453–457 (LTELL) match the LXXLL motif motif.

It belongs to the cation diffusion facilitator (CDF) transporter (TC 2.A.4) family. SLC30A subfamily.

The protein resides in the mitochondrion membrane. It localises to the nucleus. Its subcellular location is the endoplasmic reticulum. It carries out the reaction Zn(2+)(in) + 2 H(+)(out) = Zn(2+)(out) + 2 H(+)(in). Its function is as follows. Mitochondrial proton-coupled zinc ion antiporter mediating the export of zinc from the mitochondria and involved in zinc homeostasis, zinc mobilization as well as mitochondrial morphology and health. In nucleus, may function as a secondary coactivator for nuclear receptors. The sequence is that of Proton-coupled zinc antiporter SLC30A9, mitochondrial (slc30a9) from Xenopus laevis (African clawed frog).